A 168-amino-acid polypeptide reads, in one-letter code: Pollen allergen Cro s 1 (168 aa).

A signal peptide spans 1–26 (MGKCQAVFLLVGALCVLSLAGVANAA). 3 cysteine pairs are disulfide-bonded: C38/C109, C41/C153, and C62/C97. A glycan (N-linked (GlcNAc...) asparagine) is linked at N64.

It belongs to the Ole e I family. As to expression, expressed in pollen.

Its subcellular location is the secreted. The sequence is that of Pollen allergen Cro s 1 from Crocus sativus (Saffron).